The following is a 291-amino-acid chain: Feruloyl esterase B (291 aa).

The signal sequence occupies residues 1–18; it reads MLVRSFLGFAVLAATCLA. N-linked (GlcNAc...) asparagine glycosylation is present at Asn117. Residue Ser136 is the Charge relay system of the active site. N-linked (GlcNAc...) asparagine glycosylation occurs at Asn179.

It belongs to the carbohydrate esterase 1 (CE1) family. Feruloyl esterase type B subfamily.

It localises to the secreted. It carries out the reaction feruloyl-polysaccharide + H2O = ferulate + polysaccharide.. Its function is as follows. Feruloyl esterase which acts in synergy with xylanases in degradation of plant cell walls. Hydrolyzes the ester linkage of hydroxycinnamic acids (ferulic acid (FA) and p-coumaric acid) and diferulates present in plant cell walls. Is active on substrates containing ferulic acid ester linked to the C-5 and C-2 linkages of arabinofuranose, while it was found capable of de-esterifying acetylated glucuronoxylans. Efficiently releases ferulic acid (FA) from destarched wheat bran when incubated with an M3 xylanase. The sequence is that of Feruloyl esterase B (Fae1a) from Thermothelomyces thermophilus (strain ATCC 42464 / BCRC 31852 / DSM 1799) (Sporotrichum thermophile).